The following is a 158-amino-acid chain: Phospholipase A2 AP-PLA2-II (158 aa).

Residues 1 to 16 (MKTFLILAMAVALAKA) form the signal peptide. A propeptide spanning residues 17–23 (QSTDEIT) is cleaved from the precursor. 6 disulfide bridges follow: cysteine 51–cysteine 158, cysteine 53–cysteine 69, cysteine 68–cysteine 138, cysteine 75–cysteine 131, cysteine 85–cysteine 124, and cysteine 109–cysteine 129. Residues glycine 54 and glycine 56 each contribute to the Ca(2+) site. Histidine 72 is an active-site residue. Aspartate 73 contributes to the Ca(2+) binding site. Aspartate 132 is a catalytic residue.

Belongs to the phospholipase A2 family. Group I subfamily. As to quaternary structure, monomer. It depends on Ca(2+) as a cofactor. In terms of tissue distribution, expressed by the venom gland.

The protein resides in the secreted. It catalyses the reaction a 1,2-diacyl-sn-glycero-3-phosphocholine + H2O = a 1-acyl-sn-glycero-3-phosphocholine + a fatty acid + H(+). Functionally, starfish phospholipase A2 (PLA2) that has hemorrhagic and capillary permeability-increasing activities and hence is considered to be deeply involved in the local inflammation. Shows hemolytic activity only in the presence of phosphatidylcholine (PC). PLA2 catalyzes the calcium-dependent hydrolysis of the 2-acyl groups in 3-sn-phosphoglycerides. This Acanthaster planci (Crown-of-thorns starfish) protein is Phospholipase A2 AP-PLA2-II.